The sequence spans 282 residues: tRNA N(3)-cytidine methyltransferase METTL6 (282 aa).

The S-adenosyl-L-methionine site is built by tryptophan 45, tyrosine 49, glycine 87, aspartate 110, aspartate 136, leucine 137, and isoleucine 157.

It belongs to the methyltransferase superfamily. METL family. As to quaternary structure, monomer. Interacts with SARS1/SerRS; interaction is mediated via tRNA(Ser) and is required for N(3)-methylcytidine methylation.

The protein localises to the cytoplasm. It localises to the nucleus. It catalyses the reaction cytidine(32) in tRNA(Ser) + S-adenosyl-L-methionine = N(3)-methylcytidine(32) in tRNA(Ser) + S-adenosyl-L-homocysteine + H(+). Functionally, S-adenosyl-L-methionine-dependent methyltransferase that mediates N(3)-methylcytidine modification of residue 32 of the tRNA anticodon loop of tRNA(Ser), including tRNA(Ser)(UGA) and tRNA(Ser)(GCU). Interaction with SARS1/SerRS is required for N(3)-methylcytidine methylation. The sequence is that of tRNA N(3)-cytidine methyltransferase METTL6 (METTL6) from Pongo abelii (Sumatran orangutan).